The sequence spans 329 residues: Serpentine receptor class alpha-4 (329 aa).

Transmembrane regions (helical) follow at residues 25-45 (IIVL…IKVV), 103-123 (LYLE…TGLL), 144-164 (GLAI…LIIW), 188-208 (YFQS…ILIW), 238-258 (ICFL…GFFI), and 273-293 (LVAV…ILIF).

It belongs to the nematode receptor-like protein sra family.

It localises to the membrane. The sequence is that of Serpentine receptor class alpha-4 (sra-4) from Caenorhabditis elegans.